Here is a 402-residue protein sequence, read N- to C-terminus: DNA replication and repair protein RecF (402 aa).

ATP is bound at residue 30-37 (GYNGIGKT).

This sequence belongs to the RecF family.

The protein resides in the cytoplasm. In terms of biological role, the RecF protein is involved in DNA metabolism; it is required for DNA replication and normal SOS inducibility. RecF binds preferentially to single-stranded, linear DNA. It also seems to bind ATP. This is DNA replication and repair protein RecF from Pseudarthrobacter chlorophenolicus (strain ATCC 700700 / DSM 12829 / CIP 107037 / JCM 12360 / KCTC 9906 / NCIMB 13794 / A6) (Arthrobacter chlorophenolicus).